The primary structure comprises 151 residues: Large ribosomal subunit protein bL9 (151 aa).

Belongs to the bacterial ribosomal protein bL9 family.

Its function is as follows. Binds to the 23S rRNA. The sequence is that of Large ribosomal subunit protein bL9 from Prochlorococcus marinus (strain MIT 9215).